Reading from the N-terminus, the 594-residue chain is UvrABC system protein C (594 aa).

The 87-residue stretch at 13 to 99 (NGSGVYQYFD…IKQLKPKYNI (87 aa)) folds into the GIY-YIG domain. One can recognise a UVR domain in the interval 205–240 (DKLIKELQLKMDRLSSNLRFEEALIYRDRISKIQKI).

The protein belongs to the UvrC family. In terms of assembly, interacts with UvrB in an incision complex.

The protein resides in the cytoplasm. Functionally, the UvrABC repair system catalyzes the recognition and processing of DNA lesions. UvrC both incises the 5' and 3' sides of the lesion. The N-terminal half is responsible for the 3' incision and the C-terminal half is responsible for the 5' incision. The sequence is that of UvrABC system protein C from Helicobacter acinonychis (strain Sheeba).